An 82-amino-acid chain; its full sequence is U7-hexatoxin-Mg1a (82 aa).

An N-terminal signal peptide occupies residues 1–26; that stretch reads MRTIVFLIVSILLLSSAVLMLAEGNA. The propeptide occupies 27 to 44; that stretch reads ASHELQEYPIEESLEEQR. Intrachain disulfides connect Cys-46/Cys-62, Cys-51/Cys-67, Cys-61/Cys-77, and Cys-69/Cys-75. The residue at position 80 (Arg-80) is an Arginine amide.

The protein belongs to the rTX family. In terms of tissue distribution, expressed by the venom gland.

It localises to the secreted. Its function is as follows. Induces flaccid paralysis when injected into lepidopteran larvae. Intracranial injection into mice causes awkwardness of movement and laboured respiration until death. This is U7-hexatoxin-Mg1a from Macrothele gigas (Japanese funnel web spider).